The chain runs to 341 residues: Two-component response regulator ORR30 (341 aa).

The Response regulatory domain maps to 12–127 (RVLVIDDDCS…ELSNIWQHIF (116 aa)). D63 carries the 4-aspartylphosphate modification. The HTH myb-type domain maps to 195–254 (DLGKSRLTWTTQLHRQFIAAVNHLGEDKAVPKKILGIMKVKHLTREQVASHLQKYRMQLK). A DNA-binding region (H-T-H motif) is located at residues 225 to 250 (PKKILGIMKVKHLTREQVASHLQKYR).

Belongs to the ARR family. Type-B subfamily. Post-translationally, two-component system major event consists of a His-to-Asp phosphorelay between a sensor histidine kinase (HK) and a response regulator (RR). In plants, the His-to-Asp phosphorelay involves an additional intermediate named Histidine-containing phosphotransfer protein (HPt). This multistep phosphorelay consists of a His-Asp-His-Asp sequential transfer of a phosphate group between first a His and an Asp of the HK protein, followed by the transfer to a conserved His of the HPt protein and finally the transfer to an Asp in the receiver domain of the RR protein.

The protein localises to the nucleus. Functionally, transcriptional activator that acts as a floral inducer to promote short-day (SD) flowering pathway. Activates HD3A and other FT-like genes independently from HD1. May also activate MADS-box transcription factors involved in flowering regulation. Functions as a response regulator involved in His-to-Asp phosphorelay signal transduction system. Phosphorylation of the Asp residue in the receiver domain activates the ability of the protein to promote the transcription of target genes. May directly activate some type-A response regulators in response to cytokinins. The polypeptide is Two-component response regulator ORR30 (Oryza sativa subsp. japonica (Rice)).